The following is a 294-amino-acid chain: Ethanolamine ammonia-lyase small subunit (294 aa).

Adenosylcob(III)alamin contacts are provided by valine 207 and glutamate 228.

The protein belongs to the EutC family. As to quaternary structure, the basic unit is a heterodimer which dimerizes to form tetramers. The heterotetramers trimerize; 6 large subunits form a core ring with 6 small subunits projecting outwards. Adenosylcob(III)alamin serves as cofactor.

Its subcellular location is the bacterial microcompartment. It carries out the reaction ethanolamine = acetaldehyde + NH4(+). It functions in the pathway amine and polyamine degradation; ethanolamine degradation. Catalyzes the deamination of various vicinal amino-alcohols to oxo compounds. Allows this organism to utilize ethanolamine as the sole source of nitrogen and carbon in the presence of external vitamin B12. This chain is Ethanolamine ammonia-lyase small subunit, found in Clostridium tetani (strain Massachusetts / E88).